We begin with the raw amino-acid sequence, 374 residues long: Centrosomal protein of 41 kDa (374 aa).

One can recognise a Rhodanese domain in the interval 176-273; sequence PDCPYLLLDV…VAQKFPEGMT (98 aa). 2 disordered regions span residues 279-301 and 329-374; these read ISCL…QTSQ and ETSS…RPWK. Residues 329 to 349 show a composition bias toward low complexity; sequence ETSSRLSSRMSTSSARSKAST.

It belongs to the CEP41 family. Expressed in various ciliary organs, including Kupffer's vesicle, ear and heart, as well as brain and kidney.

It localises to the cytoplasm. The protein resides in the cytoskeleton. The protein localises to the microtubule organizing center. Its subcellular location is the centrosome. It is found in the cell projection. It localises to the cilium. The protein resides in the cilium basal body. Its function is as follows. Required during ciliogenesis for tubulin glutamylation in cilium. Probably acts by participating in the transport of tubulin polyglutamylases between the basal body and the cilium. In Danio rerio (Zebrafish), this protein is Centrosomal protein of 41 kDa (cep41).